The sequence spans 559 residues: Cocaine esterase (559 aa).

The first 26 residues, 1 to 26, serve as a signal peptide directing secretion; it reads MRLHRLRARLSAVACGLLLLLVRGQG. Gln27 is subject to Pyrrolidone carboxylic acid. Cys95 and Cys123 are disulfide-bonded. An N-linked (GlcNAc...) asparagine glycan is attached at Asn111. Residue Ser228 is the Acyl-ester intermediate of the active site. A glycan (N-linked (GlcNAc...) asparagine) is linked at Asn276. The cysteines at positions 280 and 291 are disulfide-linked. Active-site charge relay system residues include Glu345 and His457. The Prevents secretion from ER signature appears at 556-559; the sequence is HTEL.

It belongs to the type-B carboxylesterase/lipase family. In terms of assembly, monomer. In terms of processing, glycosylated. In terms of tissue distribution, preferentially expressed in intestine with moderate expression in liver. Within the intestine, highest expression is found in small intestine with lower expression in colon and rectum.

The protein localises to the endoplasmic reticulum lumen. The enzyme catalyses cocaine + H2O = ecgonine methyl ester + benzoate + H(+). It catalyses the reaction a carboxylic ester + H2O = an alcohol + a carboxylate + H(+). The catalysed reaction is 4-methylumbelliferyl acetate + H2O = 4-methylumbelliferone + acetate + H(+). It carries out the reaction 2-(5Z,8Z,11Z,14Z-eicosatetraenoyl)-glycerol + H2O = glycerol + (5Z,8Z,11Z,14Z)-eicosatetraenoate + H(+). The enzyme catalyses prostaglandin E2 1-glyceryl ester + H2O = prostaglandin E2 + glycerol + H(+). It catalyses the reaction prostaglandin F2alpha 1-glyceryl ester + H2O = prostaglandin F2alpha + glycerol + H(+). Functionally, involved in the detoxification of xenobiotics and in the activation of ester and amide prodrugs. Shows high catalytic efficiency for hydrolysis of cocaine, 4-methylumbelliferyl acetate, heroin and 6-monoacetylmorphine. Hydrolyzes aspirin, substrates with large alcohol group and small acyl group and endogenous lipids such as triacylglycerol. Converts monoacylglycerides to free fatty acids and glycerol. Hydrolyzes of 2-arachidonoylglycerol and prostaglandins. The chain is Cocaine esterase from Homo sapiens (Human).